Consider the following 245-residue polypeptide: tRNA (guanine-N(1)-)-methyltransferase (245 aa).

Residues Gly-112 and 132–137 (IGDFVL) each bind S-adenosyl-L-methionine.

Belongs to the RNA methyltransferase TrmD family. As to quaternary structure, homodimer.

The protein resides in the cytoplasm. It carries out the reaction guanosine(37) in tRNA + S-adenosyl-L-methionine = N(1)-methylguanosine(37) in tRNA + S-adenosyl-L-homocysteine + H(+). In terms of biological role, specifically methylates guanosine-37 in various tRNAs. The protein is tRNA (guanine-N(1)-)-methyltransferase of Geobacter metallireducens (strain ATCC 53774 / DSM 7210 / GS-15).